A 269-amino-acid polypeptide reads, in one-letter code: Imidazole glycerol phosphate synthase subunit HisF (269 aa).

Catalysis depends on residues aspartate 23 and aspartate 142.

It belongs to the HisA/HisF family. Heterodimer of HisH and HisF.

Its subcellular location is the cytoplasm. The enzyme catalyses 5-[(5-phospho-1-deoxy-D-ribulos-1-ylimino)methylamino]-1-(5-phospho-beta-D-ribosyl)imidazole-4-carboxamide + L-glutamine = D-erythro-1-(imidazol-4-yl)glycerol 3-phosphate + 5-amino-1-(5-phospho-beta-D-ribosyl)imidazole-4-carboxamide + L-glutamate + H(+). It functions in the pathway amino-acid biosynthesis; L-histidine biosynthesis; L-histidine from 5-phospho-alpha-D-ribose 1-diphosphate: step 5/9. Functionally, IGPS catalyzes the conversion of PRFAR and glutamine to IGP, AICAR and glutamate. The HisF subunit catalyzes the cyclization activity that produces IGP and AICAR from PRFAR using the ammonia provided by the HisH subunit. The protein is Imidazole glycerol phosphate synthase subunit HisF of Bordetella parapertussis (strain 12822 / ATCC BAA-587 / NCTC 13253).